The chain runs to 238 residues: Auxin-responsive protein IAA2 (238 aa).

An EAR-like (transcriptional repression) motif is present at residues 24–28 (LCLGL). Composition is skewed to low complexity over residues 33–44 (SSSSSSKPSEGS), 59–69 (ASKPSGAAAAA), and 85–94 (ASSSSSSSKQ). Disordered regions lie at residues 33-69 (SSSSSSKPSEGSTAAPAFALRSNGTNASKPSGAAAAA) and 82-114 (RNLASSSSSSSKQAPPPPSSSPQNGDKASKDGG). The 99-residue stretch at 118–216 (GMFVKINMDG…TAKRLRVLKS (99 aa)) folds into the PB1 domain. Residues 217 to 238 (SDLPPPSLMRAAGSRKRAAADS) form a disordered region. The segment covering 229–238 (GSRKRAAADS) has biased composition (basic residues).

It belongs to the Aux/IAA family. Homodimers and heterodimers. Highly expressed in flowers.

Its subcellular location is the nucleus. Functionally, aux/IAA proteins are short-lived transcriptional factors that function as repressors of early auxin response genes at low auxin concentrations. This chain is Auxin-responsive protein IAA2 (IAA2), found in Oryza sativa subsp. japonica (Rice).